Here is a 228-residue protein sequence, read N- to C-terminus: Secreted LysM effector ECP6 (228 aa).

An N-terminal signal peptide occupies residues 1-18 (MQSMILFAAALMGAAVNG). Disulfide bonds link C36–C90, C64–C98, C109–C163, and C168–C220. Residues 42–86 (IKYTVVKGDTLTSIAKKFKSGICNIVSVNKLANPNLIELGATLII) form the LysM 1 domain. 4 residues coordinate chitin: T51, T53, N76, and I78. N-linked (GlcNAc...) asparagine glycans are attached at residues N89, N95, N127, and N133. LysM domains follow at residues 115-160 (GSYT…IITV) and 172-216 (GTYN…QIIL). Residues G179, L181, V183, P205, S206, and L208 each contribute to the chitin site. N-linked (GlcNAc...) asparagine glycosylation is present at N222.

This sequence belongs to the secreted LysM effector family. As to quaternary structure, forms homodimers.

The protein localises to the secreted. In terms of biological role, secreted effector that enables the plant pathogenic fungus to manipulate host defenses for successful infection. Binds chitine, but not to any other glycan, including the N-linked glycan chitobiose. Outcompetes host immune receptor for chitin binding through intrachain LysM dimerization. During infection, sequesters chitin oligosaccharides that are released from the cell walls of invading hyphae to prevent elicitation of host immunity. The protein is Secreted LysM effector ECP6 of Passalora fulva (Tomato leaf mold).